We begin with the raw amino-acid sequence, 119 residues long: gSG7 salivary protein (119 aa).

2 disulfide bridges follow: Cys58–Cys113 and Cys81–Cys91.

The protein localises to the secreted. With respect to regulation, the activity is increased in the presence of host properdin (CFP). Its function is as follows. Salivary protein that inhibits the alternative pathway of complement system activation in the host while having no inhibitory effect on the classical pathway. Inhibits activity of activated host C3-convertase complex C3bBb (C3-CFB). Enhances accumulation of C3bBb on immobilized properdin. This chain is gSG7 salivary protein, found in Anopheles freeborni (Western malaria mosquito).